Consider the following 663-residue polypeptide: MLQMPKLNEIPPGRGGPGEPWGEGRWAGPTGPEAARPARGARGQARGARARWDSWEHSRLPTHPGPGWDQCSPSFLCAPSSQKLIMESKDEVSDSDSGIILQSGPDSPVSPMKELTNAVRKQQRALEARLEACLEELRRLCLREAELTGTLPAEYPLKPGEKAPKVRRRIGAAYKLDEWALHREDPLSSLERQLALQLQITEAARRLCAEENLSRQARRQRKHAALQEEKKLRDLQRCLGDRRRNSEPPPTTVPSLGRELSASDDSSLSDGLLLEEEDSQAPKPPPESPAPPSRPLPPQSLEGLQPTGPESGGQERAPIQNSPWKETSLDHPYEKPRKSSELSSESSSPATTPQDQPNPSSLWVLDAASYHVVPIRNVPGQRQGRTSAPATPEMQGRRGQSQSLRVDSFRAGAEGRGRSAFPRRRPTHYTVTVPDSCFTPGKPPLPHPACHSCSEDSGSDVSSISHPTSPGSSSPDISFLRPLCLPEPPRHRGAWGPACGRELAPHYSKLLLPAGYFPTGRYVMVAEGHLPPGEWELCRAAVGAAYDEEGAPLRYQRLVPSHSRIVRTPSLKDSPAGRGLSKAAVSEELKWWHERARLRSSRPHSLDRQGAFRVRSLPPGRESFGRASGPRTQVPPVYVLRRSTDGAPVQVFVPENGEIISQV.

The tract at residues 1–73 (MLQMPKLNEI…PGPGWDQCSP (73 aa)) is disordered. The span at 23 to 47 (EGRWAGPTGPEAARPARGARGQARG) shows a compositional bias: low complexity. Over residues 50 to 59 (ARWDSWEHSR) the composition is skewed to basic and acidic residues. Residues 117–147 (NAVRKQQRALEARLEACLEELRRLCLREAEL) are a coiled coil. The Nuclear localization signal (NLS) 1 signature appears at 164 to 170 (PKVRRRI). 2 disordered regions span residues 219–363 (RQRK…SSLW) and 375–405 (IRNV…QSLR). Positions 225–246 (ALQEEKKLRDLQRCLGDRRRNS) are enriched in basic and acidic residues. The span at 259-272 (ELSASDDSSLSDGL) shows a compositional bias: low complexity. Residues 282-298 (PKPPPESPAPPSRPLPP) are compositionally biased toward pro residues. Over residues 327 to 340 (TSLDHPYEKPRKSS) the composition is skewed to basic and acidic residues. Positions 332 to 338 (PYEKPRK) match the Nuclear localization signal (NLS) 2 motif. Residues 349–361 (PATTPQDQPNPSS) are compositionally biased toward polar residues. Residues 422–428 (PRRRPTH) carry the Nuclear localization signal (NLS) 3 motif. The interval 448-483 (PACHSCSEDSGSDVSSISHPTSPGSSSPDISFLRPL) is disordered. Residues 455–475 (EDSGSDVSSISHPTSPGSSSP) show a composition bias toward low complexity.

As to quaternary structure, interacts with IRAK1, NOD2 and RIPK2; the interaction takes place upon PRR stimulation. Interacts with YWHAQ/14-3-3T; the interaction increases upon PRR stimulation and is required for cellular signaling pathway activation and cytokine secretion. Interacts (via N-terminal domain) with CYTH1 and CYTH2 (via their N-terminal domains). Interacts with FBXW11 and BTRC; associates with SCF E3 ubiquitin-protein ligase complexes.

The protein localises to the nucleus. It is found in the cytoplasm. In terms of biological role, expressed in peripheral macrophages and intestinal myeloid-derived cells, is required for optimal PRR (pattern recognition receptor)-induced signaling, cytokine secretion, and bacterial clearance. Upon stimulation of a broad range of PRRs (pattern recognition receptor) such as NOD2 or TLR2, TLR3, TLR4, TLR5, TLR7 and TLR9, associates with YWHAQ/14-3-3T, which in turn leads to the recruitment and activation of MAP kinases and NF-kappa-B signaling complexes that amplifies PRR-induced downstream signals and cytokine secretion. In the intestine, regulates adherens junction stability by regulating the degradation of CYTH1 and CYTH2, probably acting as substrate cofactor for SCF E3 ubiquitin-protein ligase complexes. Stabilizes adherens junctions by limiting CYTH1-dependent ARF6 activation. The chain is Innate immunity activator protein from Mus musculus (Mouse).